A 276-amino-acid polypeptide reads, in one-letter code: Pantothenate synthetase (276 aa).

25 to 32 provides a ligand contact to ATP; that stretch reads MGYLHRGH. His32 functions as the Proton donor in the catalytic mechanism. Gln56 provides a ligand contact to (R)-pantoate. Position 56 (Gln56) interacts with beta-alanine. An ATP-binding site is contributed by 143-146; sequence GEKD. Gln149 serves as a coordination point for (R)-pantoate. Residues Val172 and 180 to 183 each bind ATP; that span reads LSSR.

Belongs to the pantothenate synthetase family. As to quaternary structure, homodimer.

It is found in the cytoplasm. The catalysed reaction is (R)-pantoate + beta-alanine + ATP = (R)-pantothenate + AMP + diphosphate + H(+). The protein operates within cofactor biosynthesis; (R)-pantothenate biosynthesis; (R)-pantothenate from (R)-pantoate and beta-alanine: step 1/1. Its function is as follows. Catalyzes the condensation of pantoate with beta-alanine in an ATP-dependent reaction via a pantoyl-adenylate intermediate. This is Pantothenate synthetase from Thermus thermophilus (strain ATCC BAA-163 / DSM 7039 / HB27).